A 203-amino-acid chain; its full sequence is FMN-dependent NADH:quinone oxidoreductase (203 aa).

FMN contacts are provided by residues serine 9, 15-17, and 138-141; these read SVS and SRGG.

It belongs to the azoreductase type 1 family. As to quaternary structure, homodimer. FMN serves as cofactor.

The catalysed reaction is 2 a quinone + NADH + H(+) = 2 a 1,4-benzosemiquinone + NAD(+). It carries out the reaction N,N-dimethyl-1,4-phenylenediamine + anthranilate + 2 NAD(+) = 2-(4-dimethylaminophenyl)diazenylbenzoate + 2 NADH + 2 H(+). Quinone reductase that provides resistance to thiol-specific stress caused by electrophilic quinones. In terms of biological role, also exhibits azoreductase activity. Catalyzes the reductive cleavage of the azo bond in aromatic azo compounds to the corresponding amines. The polypeptide is FMN-dependent NADH:quinone oxidoreductase (Methylorubrum extorquens (strain CM4 / NCIMB 13688) (Methylobacterium extorquens)).